We begin with the raw amino-acid sequence, 199 residues long: CASP-like protein 1B2 (199 aa).

At 1 to 22 (MALQSEEKLEVGYSSLQPKTRK) the chain is on the cytoplasmic side. Residues 23 to 43 (WVLLMLRVLAFFATAAATVVM) form a helical membrane-spanning segment. The Extracellular segment spans residues 44 to 74 (GLNKETKTLVVATVGSTPIKASLAAKFQHTP). Residues 75 to 95 (AFVFFVIANGLASIHNLVMIM) form a helical membrane-spanning segment. Over 96–112 (GDLFGQKLDYKGLRLAM) the chain is Cytoplasmic. Residues 113–133 (IAILDMMTVALVSGGVSAAAF) form a helical membrane-spanning segment. Over 134 to 163 (MAELGKNGNSHARWNKICDKFETFCDHGGG) the chain is Extracellular. A helical transmembrane segment spans residues 164 to 184 (ALIASFAGLILMLIISVMSII). Residues 185 to 199 (KLLIKPKPDSTIVVP) lie on the Cytoplasmic side of the membrane.

Belongs to the Casparian strip membrane proteins (CASP) family. As to quaternary structure, homodimer and heterodimers.

Its subcellular location is the cell membrane. This chain is CASP-like protein 1B2, found in Populus trichocarpa (Western balsam poplar).